We begin with the raw amino-acid sequence, 582 residues long: Two-component response regulator ORR26 (582 aa).

The Response regulatory domain maps to 11–126 (RVLVVDDDPT…ELRNIWQHVY (116 aa)). 4-aspartylphosphate is present on Asp-62. The span at 166 to 182 (SDTMRKRKDVDKDHADQ) shows a compositional bias: basic and acidic residues. The segment at 166–187 (SDTMRKRKDVDKDHADQESSDG) is disordered. Positions 189–248 (TVKKARVVWSVDLHQKFVNAVNQIGFDKVGPKKILDLMNVPGLTRENVASHLQKYRLYLS) form a DNA-binding region, myb-like GARP.

This sequence belongs to the ARR family. Type-B subfamily. Post-translationally, two-component system major event consists of a His-to-Asp phosphorelay between a sensor histidine kinase (HK) and a response regulator (RR). In plants, the His-to-Asp phosphorelay involves an additional intermediate named Histidine-containing phosphotransfer protein (HPt). This multistep phosphorelay consists of a His-Asp-His-Asp sequential transfer of a phosphate group between first a His and an Asp of the HK protein, followed by the transfer to a conserved His of the HPt protein and finally the transfer to an Asp in the receiver domain of the RR protein.

It localises to the nucleus. Transcriptional activator that binds specific DNA sequence. Functions as a response regulator involved in His-to-Asp phosphorelay signal transduction system. Phosphorylation of the Asp residue in the receiver domain activates the ability of the protein to promote the transcription of target genes. May directly activate some type-A response regulators in response to cytokinins. This is Two-component response regulator ORR26 from Oryza sativa subsp. japonica (Rice).